A 508-amino-acid polypeptide reads, in one-letter code: Photosystem II CP47 reaction center protein (508 aa).

Helical transmembrane passes span 21–36 (AVHL…WAGS), 101–115 (IILS…IWHW), 140–156 (GIHL…FGAF), 203–218 (IAAG…FHLS), 237–252 (VLSS…AFVV), and 457–472 (NFAL…HGSR).

Belongs to the PsbB/PsbC family. PsbB subfamily. As to quaternary structure, PSII is composed of 1 copy each of membrane proteins PsbA, PsbB, PsbC, PsbD, PsbE, PsbF, PsbH, PsbI, PsbJ, PsbK, PsbL, PsbM, PsbT, PsbX, PsbY, PsbZ, Psb30/Ycf12, at least 3 peripheral proteins of the oxygen-evolving complex and a large number of cofactors. It forms dimeric complexes. Binds multiple chlorophylls. PSII binds additional chlorophylls, carotenoids and specific lipids. serves as cofactor.

The protein localises to the plastid. It is found in the chloroplast thylakoid membrane. Functionally, one of the components of the core complex of photosystem II (PSII). It binds chlorophyll and helps catalyze the primary light-induced photochemical processes of PSII. PSII is a light-driven water:plastoquinone oxidoreductase, using light energy to abstract electrons from H(2)O, generating O(2) and a proton gradient subsequently used for ATP formation. This is Photosystem II CP47 reaction center protein from Staurastrum punctulatum (Green alga).